The chain runs to 239 residues: Sugar fermentation stimulation protein homolog (239 aa).

This sequence belongs to the SfsA family.

The protein is Sugar fermentation stimulation protein homolog of Mannheimia succiniciproducens (strain KCTC 0769BP / MBEL55E).